We begin with the raw amino-acid sequence, 715 residues long: Polyribonucleotide nucleotidyltransferase (715 aa).

Mg(2+)-binding residues include aspartate 487 and aspartate 493. The region spanning 554–613 (PRIETFKIATDKIREVIGTGGKVIREIVEKTGAKVNIDDDGTVKVASSDGESIKAAIKWI) is the KH domain. Residues 623 to 691 (NAIYDGTVVK…DRGKTRLSMK (69 aa)) enclose the S1 motif domain. Residues 696–715 (ETGEDLEAKQKAAEGATAAE) are disordered.

It belongs to the polyribonucleotide nucleotidyltransferase family. The cofactor is Mg(2+).

The protein resides in the cytoplasm. The catalysed reaction is RNA(n+1) + phosphate = RNA(n) + a ribonucleoside 5'-diphosphate. Involved in mRNA degradation. Catalyzes the phosphorolysis of single-stranded polyribonucleotides processively in the 3'- to 5'-direction. The protein is Polyribonucleotide nucleotidyltransferase of Rhodopseudomonas palustris (strain BisB18).